The following is a 160-amino-acid chain: Anaerobic nitrite reductase Glb1-1 (160 aa).

The Globin domain maps to 8–157; sequence GFTEEQEALV…LVNAIKSEMK (150 aa). The Homodimerization signature appears at 41–45; sequence EIAPS. Positions 51, 65, 69, 99, and 104 each coordinate heme b. Residues 111–123 carry the Homodimerization motif; sequence DEHFEVTKFALLE.

The protein belongs to the plant globin family. Homodimer. Requires heme b as cofactor.

It carries out the reaction Fe(III)-heme b-[protein] + nitric oxide + H2O = Fe(II)-heme b-[protein] + nitrite + 2 H(+). In terms of biological role, phytoglobin that reduces nitrite to nitric oxide (NO) under anoxic conditions (e.g. during flooding or in waterlogged soil) and upon root nodulation. Required for general plant development and during nodulation, especially for the onset of symbiosis. Monitors nitric oxide (NO) levels during early phase of the nitrogen-fixing symbiosis and buffers oxygen in functioning nodules. May not function as an oxygen storage or transport protein. Has an unusually high affinity for O(2) through a hexacoordinate heme iron because of a very low dissociation constant. In Medicago truncatula (Barrel medic), this protein is Anaerobic nitrite reductase Glb1-1.